Here is a 220-residue protein sequence, read N- to C-terminus: MDSRCFGFFFTLLSLNVIVLAYDPDTLQDLCVADRTSGIKVNGFTCKPESNITASDFFFAGIGKPAVVNNTVGSAVTGANVEKIAGLNTLGVSLARIDYAPGGLNPPHTHPRATEVIFVLEGELDVGFITTANKLFAKTVKKGEVFVFPRGLIHYQKNNDKAKPASVISAFNSQLPGTQSIAATLFTATPAIPDHVLTTTFQIGTKEIEKIKSKFAPKKV.

Positions 1–21 (MDSRCFGFFFTLLSLNVIVLA) are cleaved as a signal peptide. Cysteine 31 and cysteine 46 are oxidised to a cystine. Residues asparagine 51 and asparagine 69 are each glycosylated (N-linked (GlcNAc...) asparagine). The region spanning 58 to 209 (FFAGIGKPAV…TFQIGTKEIE (152 aa)) is the Cupin type-1 domain. Mn(2+) is bound by residues histidine 108, histidine 110, glutamate 115, and histidine 154.

Belongs to the germin family. In terms of assembly, oligomer (believed to be a pentamer but probably hexamer).

The protein localises to the secreted. It localises to the extracellular space. It is found in the apoplast. In terms of biological role, may play a role in plant defense. Probably has no oxalate oxidase activity even if the active site is conserved. The polypeptide is Germin-like protein subfamily 2 member 4 (GLP10) (Arabidopsis thaliana (Mouse-ear cress)).